An 892-amino-acid chain; its full sequence is Smad protein daf-3 (892 aa).

Disordered regions lie at residues 1 to 43 and 135 to 161; these read MGDH…GLED and PYLD…FDTK. The segment covering 15–26 has biased composition (polar residues); that stretch reads IPPQFNYSQPGT. One can recognise an MH1 domain in the interval 198–347; that stretch reads KIVEYLMYYR…YEIVIGTMIV (150 aa). Residues 505-552 form a disordered region; it reads YPDFHHPFNQQPHQPPQLSQNHTSQQGSHQPGHQGQVPNDPPISRPVL. Residues 528–540 show a composition bias toward low complexity; the sequence is SQQGSHQPGHQGQ. One can recognise an MH2 domain in the interval 657-880; it reads WGTIVYYEKN…TNCFEPLGME (224 aa).

It belongs to the dwarfin/SMAD family. Interacts with R-SMADs daf-8 and daf-14. Interacts with daf-14 in a daf-8 dependent manner. May interact with daf-5.

Its subcellular location is the cytoplasm. The protein resides in the nucleus. The protein localises to the chromosome. Functionally, transcriptional regulator and common SMAD (co-SMAD), required to regulate entry into a developmentally arrested larval state known as dauer, in response to harsh environmental conditions. Probable component of transcriptional regulatory complex with SMAD protein daf-5. Acts antagonistically to SMAD signaling downstream of TGF-beta-like daf-7 signaling. Binds to the 5'-GTCTG-3' motif found in regulatory regions and may modulate the expression of genes involved in TGF-beta-like daf-7 and Notch lag-2 signaling. May regulate gene expression outside the dauer pathway. The chain is Smad protein daf-3 from Caenorhabditis elegans.